Consider the following 289-residue polypeptide: Ribosomal RNA small subunit methyltransferase A (289 aa).

S-adenosyl-L-methionine is bound by residues N21, L23, G48, E69, D94, and N120.

This sequence belongs to the class I-like SAM-binding methyltransferase superfamily. rRNA adenine N(6)-methyltransferase family. RsmA subfamily.

Its subcellular location is the cytoplasm. The enzyme catalyses adenosine(1518)/adenosine(1519) in 16S rRNA + 4 S-adenosyl-L-methionine = N(6)-dimethyladenosine(1518)/N(6)-dimethyladenosine(1519) in 16S rRNA + 4 S-adenosyl-L-homocysteine + 4 H(+). Specifically dimethylates two adjacent adenosines (A1518 and A1519) in the loop of a conserved hairpin near the 3'-end of 16S rRNA in the 30S particle. May play a critical role in biogenesis of 30S subunits. The polypeptide is Ribosomal RNA small subunit methyltransferase A (Haemophilus ducreyi (strain 35000HP / ATCC 700724)).